The primary structure comprises 214 residues: N-(5'-phosphoribosyl)anthranilate isomerase (214 aa).

The protein belongs to the TrpF family.

It catalyses the reaction N-(5-phospho-beta-D-ribosyl)anthranilate = 1-(2-carboxyphenylamino)-1-deoxy-D-ribulose 5-phosphate. Its pathway is amino-acid biosynthesis; L-tryptophan biosynthesis; L-tryptophan from chorismate: step 3/5. This chain is N-(5'-phosphoribosyl)anthranilate isomerase, found in Haloarcula marismortui (strain ATCC 43049 / DSM 3752 / JCM 8966 / VKM B-1809) (Halobacterium marismortui).